The chain runs to 407 residues: Chorismate synthase (407 aa).

2 residues coordinate NADP(+): Arg-40 and Arg-46. Residues 135–137 (RAS), 256–257 (QA), Gly-300, 315–319 (KPIST), and Arg-341 contribute to the FMN site.

It belongs to the chorismate synthase family. In terms of assembly, homotetramer. It depends on FMNH2 as a cofactor.

It catalyses the reaction 5-O-(1-carboxyvinyl)-3-phosphoshikimate = chorismate + phosphate. It participates in metabolic intermediate biosynthesis; chorismate biosynthesis; chorismate from D-erythrose 4-phosphate and phosphoenolpyruvate: step 7/7. Its function is as follows. Catalyzes the anti-1,4-elimination of the C-3 phosphate and the C-6 proR hydrogen from 5-enolpyruvylshikimate-3-phosphate (EPSP) to yield chorismate, which is the branch point compound that serves as the starting substrate for the three terminal pathways of aromatic amino acid biosynthesis. This reaction introduces a second double bond into the aromatic ring system. This chain is Chorismate synthase, found in Mycobacterium leprae (strain Br4923).